A 129-amino-acid polypeptide reads, in one-letter code: L-ectoine synthase (129 aa).

This sequence belongs to the ectoine synthase family.

The enzyme catalyses (2S)-4-acetamido-2-aminobutanoate = L-ectoine + H2O. Its pathway is amine and polyamine biosynthesis; ectoine biosynthesis; L-ectoine from L-aspartate 4-semialdehyde: step 3/3. Its function is as follows. Catalyzes the circularization of gamma-N-acetyl-alpha,gamma-diaminobutyric acid (ADABA) to ectoine (1,4,5,6-tetrahydro-2-methyl-4-pyrimidine carboxylic acid), which is an excellent osmoprotectant. The chain is L-ectoine synthase from Mycobacterium sp. (strain KMS).